The sequence spans 182 residues: Ribosome-recycling factor (182 aa).

The protein belongs to the RRF family.

The protein resides in the cytoplasm. Functionally, responsible for the release of ribosomes from messenger RNA at the termination of protein biosynthesis. May increase the efficiency of translation by recycling ribosomes from one round of translation to another. This is Ribosome-recycling factor from Prochlorococcus marinus subsp. pastoris (strain CCMP1986 / NIES-2087 / MED4).